The primary structure comprises 87 residues: Acyl-CoA-binding protein (87 aa).

Position 2 is an N-acetylserine (serine 2). Residues 2–87 (SQAEFEKAAE…VEELKKKYGI (86 aa)) enclose the ACB domain. Lysine 8 bears the N6-acetyllysine; alternate mark. Position 8 is an N6-succinyllysine; alternate (lysine 8). Lysine 14 contributes to the an acyl-CoA binding site. The residue at position 17 (lysine 17) is an N6-succinyllysine. Position 19 is an N6-acetyllysine (lysine 19). Position 29 is a phosphotyrosine (tyrosine 29). An acyl-CoA contacts are provided by residues 29–33 (YSHYK), lysine 51, lysine 55, and tyrosine 74. The residue at position 51 (lysine 51) is an N6-acetyllysine. Position 55 is an N6-acetyllysine; alternate (lysine 55). Lysine 55 is subject to N6-succinyllysine; alternate. Lysine 55 bears the N6-(2-hydroxyisobutyryl)lysine; alternate mark. N6-malonyllysine; alternate is present on lysine 55. Lysine 77 carries the post-translational modification N6-acetyllysine; alternate. Lysine 77 is subject to N6-succinyllysine; alternate.

Belongs to the ACBP family. As to quaternary structure, monomer.

Its subcellular location is the endoplasmic reticulum. It localises to the golgi apparatus. Functionally, binds medium- and long-chain acyl-CoA esters with very high affinity and may function as an intracellular carrier of acyl-CoA esters. It is also able to displace diazepam from the benzodiazepine (BZD) recognition site located on the GABA type A receptor. It is therefore possible that this protein also acts as a neuropeptide to modulate the action of the GABA receptor. DBI(32-86) has antibacterial properties. This chain is Acyl-CoA-binding protein (DBI), found in Sus scrofa (Pig).